We begin with the raw amino-acid sequence, 425 residues long: Serine--tRNA ligase (425 aa).

230–232 (TSE) is an L-serine binding site. ATP is bound by residues 261–263 (RRE) and V277. E284 serves as a coordination point for L-serine. 348 to 351 (ELTS) contacts ATP. Residue T382 participates in L-serine binding.

It belongs to the class-II aminoacyl-tRNA synthetase family. Type-1 seryl-tRNA synthetase subfamily. In terms of assembly, homodimer. The tRNA molecule binds across the dimer.

Its subcellular location is the cytoplasm. The enzyme catalyses tRNA(Ser) + L-serine + ATP = L-seryl-tRNA(Ser) + AMP + diphosphate + H(+). It catalyses the reaction tRNA(Sec) + L-serine + ATP = L-seryl-tRNA(Sec) + AMP + diphosphate + H(+). It functions in the pathway aminoacyl-tRNA biosynthesis; selenocysteinyl-tRNA(Sec) biosynthesis; L-seryl-tRNA(Sec) from L-serine and tRNA(Sec): step 1/1. Catalyzes the attachment of serine to tRNA(Ser). Is also able to aminoacylate tRNA(Sec) with serine, to form the misacylated tRNA L-seryl-tRNA(Sec), which will be further converted into selenocysteinyl-tRNA(Sec). In Streptomyces coelicolor (strain ATCC BAA-471 / A3(2) / M145), this protein is Serine--tRNA ligase.